The sequence spans 145 residues: Superoxide dismutase [Mn/Fe] (145 aa).

2 residues coordinate Fe(3+): H10 and H64. Mn(2+) is bound by residues H10 and H64.

The protein belongs to the iron/manganese superoxide dismutase family. It depends on Mn(2+) as a cofactor. Fe(3+) serves as cofactor.

It carries out the reaction 2 superoxide + 2 H(+) = H2O2 + O2. Its function is as follows. Destroys superoxide anion radicals which are normally produced within the cells and which are toxic to biological systems. Catalyzes the dismutation of superoxide anion radicals into O2 and H2O2 by successive reduction and oxidation of the transition metal ion at the active site. This is Superoxide dismutase [Mn/Fe] (sodA) from Streptococcus salivarius.